Consider the following 692-residue polypeptide: MKVFCGRANPTTGSLEWLEEDEHYDYHQEIARSSYADMLHDKDRNIKYYQGIRAAVSRVKDRGQKALVLDIGTGTGLLSMMAVTAGADFCYAIEVFKPMAEAAVKIVERNGFSDKIKVINKHSTEVTVGPDGDLPCRANILITELFDTELIGEGALPSYEHAHKHLVQEDCEAVPHRATVYAQLVESRRMWSWNKLFPVRVRTSLGEQVIVPPSELERCPGAPSVCDIQLNQVSPADFTVLSDVLPMFSVDFSKQVSSSAACHSRQFVPLASGQAQVVLSWWDIEMDPEGKIKCTMAPFWAQTDPQELQWRDHWMQCVYFLPQEEPVVQGSPRCLVAHHDDYCVWYSLQRTSPDENDSAYQVRPVCDCQAHLLWNRPRFGEINDQDRTDHYAQALRTVLLPGSVCLCVSDGSLLSMLAHHLGAEQVFTVESSVASYRLMKRIFKVNHLEDKISVINKRPELLTAADLEGKKVSLLLGEPFFTTSLLPWHNLYFWYVRTSVDQHLAPGAVVMPQAASLHAVIVEFRDLWRIRSPCGDCEGFDVHIMDDMIKHSLDFRESREAEPHPLWEYPCRSLSKPQEILTFDFQQPIPQQPMQSKGTMELTRPGKSHGAVLWMEYQLTPDSTISTGLINPAEDKGDCCWNPHCKQAVYFLSTTLDLRVPLNGPRSVSYVVEFHPLTGDITMEFRLADTLS.

SAM-dependent MTase PRMT-type domains follow at residues Ser14–Trp345 and Ser358–Glu684. Arg32 is subject to Omega-N-methylarginine. Active-site residues include Glu144 and Glu153.

The protein belongs to the class I-like SAM-binding methyltransferase superfamily. Protein arginine N-methyltransferase family. PRMT7 subfamily. Homodimer and heterodimer. Interacts with PRMT5 and SNRPD3. Interacts with CTCFL.

The protein localises to the cytoplasm. It is found in the cytosol. It localises to the nucleus. The catalysed reaction is L-arginyl-[protein] + S-adenosyl-L-methionine = N(omega)-methyl-L-arginyl-[protein] + S-adenosyl-L-homocysteine + H(+). In terms of biological role, arginine methyltransferase that can both catalyze the formation of omega-N monomethylarginine (MMA) and symmetrical dimethylarginine (sDMA), with a preference for the formation of MMA. Specifically mediates the symmetrical dimethylation of arginine residues in the small nuclear ribonucleoproteins Sm D1 (SNRPD1) and Sm D3 (SNRPD3); such methylation being required for the assembly and biogenesis of snRNP core particles. Specifically mediates the symmetric dimethylation of histone H4 'Arg-3' to form H4R3me2s. Plays a role in gene imprinting by being recruited by CTCFL at the H19 imprinted control region (ICR) and methylating histone H4 to form H4R3me2s, possibly leading to recruit DNA methyltransferases at these sites. May also play a role in embryonic stem cell (ESC) pluripotency. Also able to mediate the arginine methylation of histone H2A and myelin basic protein (MBP) in vitro; the relevance of such results is however unclear in vivo. The chain is Protein arginine N-methyltransferase 7 (Prmt7) from Mus musculus (Mouse).